Consider the following 290-residue polypeptide: 4-hydroxybenzoate octaprenyltransferase (290 aa).

The next 8 helical transmembrane spans lie at 23-43 (IGAL…TPGV), 46-66 (LWIL…GCVV), 99-119 (LFVV…TMTI), 141-161 (LPQV…FAAV), 163-183 (ESVP…AVAY), 213-233 (LIIG…GELN), 234-254 (GLGW…VYQQ), and 268-288 (AFMN…MSYW).

It belongs to the UbiA prenyltransferase family. The cofactor is Mg(2+).

The protein localises to the cell inner membrane. The enzyme catalyses all-trans-octaprenyl diphosphate + 4-hydroxybenzoate = 4-hydroxy-3-(all-trans-octaprenyl)benzoate + diphosphate. Its pathway is cofactor biosynthesis; ubiquinone biosynthesis. In terms of biological role, catalyzes the prenylation of para-hydroxybenzoate (PHB) with an all-trans polyprenyl group. Mediates the second step in the final reaction sequence of ubiquinone-8 (UQ-8) biosynthesis, which is the condensation of the polyisoprenoid side chain with PHB, generating the first membrane-bound Q intermediate 3-octaprenyl-4-hydroxybenzoate. This chain is 4-hydroxybenzoate octaprenyltransferase, found in Escherichia coli (strain UTI89 / UPEC).